The primary structure comprises 451 residues: Bifunctional protein GlmU (451 aa).

Residues 1–229 (MQRNAVILAA…FNEIMGVNDR (229 aa)) are pyrophosphorylase. UDP-N-acetyl-alpha-D-glucosamine-binding positions include 8–11 (LAAG), K22, Q72, and 77–78 (GT). Residue D102 participates in Mg(2+) binding. The UDP-N-acetyl-alpha-D-glucosamine site is built by G139, E154, and N227. Position 227 (N227) interacts with Mg(2+). A linker region spans residues 230-250 (VMLSNAEKALQQRINIEHMRN). Residues 251–451 (GVTIIDPTTT…QITKEGYLKK (201 aa)) are N-acetyltransferase. UDP-N-acetyl-alpha-D-glucosamine contacts are provided by R332 and K350. H362 serves as the catalytic Proton acceptor. Y365 and N376 together coordinate UDP-N-acetyl-alpha-D-glucosamine. Acetyl-CoA-binding positions include 385 to 386 (NY), A422, and R439.

It in the N-terminal section; belongs to the N-acetylglucosamine-1-phosphate uridyltransferase family. The protein in the C-terminal section; belongs to the transferase hexapeptide repeat family. Homotrimer. It depends on Mg(2+) as a cofactor.

It localises to the cytoplasm. It catalyses the reaction alpha-D-glucosamine 1-phosphate + acetyl-CoA = N-acetyl-alpha-D-glucosamine 1-phosphate + CoA + H(+). It carries out the reaction N-acetyl-alpha-D-glucosamine 1-phosphate + UTP + H(+) = UDP-N-acetyl-alpha-D-glucosamine + diphosphate. The protein operates within nucleotide-sugar biosynthesis; UDP-N-acetyl-alpha-D-glucosamine biosynthesis; N-acetyl-alpha-D-glucosamine 1-phosphate from alpha-D-glucosamine 6-phosphate (route II): step 2/2. It participates in nucleotide-sugar biosynthesis; UDP-N-acetyl-alpha-D-glucosamine biosynthesis; UDP-N-acetyl-alpha-D-glucosamine from N-acetyl-alpha-D-glucosamine 1-phosphate: step 1/1. Its pathway is bacterial outer membrane biogenesis; LPS lipid A biosynthesis. In terms of biological role, catalyzes the last two sequential reactions in the de novo biosynthetic pathway for UDP-N-acetylglucosamine (UDP-GlcNAc). The C-terminal domain catalyzes the transfer of acetyl group from acetyl coenzyme A to glucosamine-1-phosphate (GlcN-1-P) to produce N-acetylglucosamine-1-phosphate (GlcNAc-1-P), which is converted into UDP-GlcNAc by the transfer of uridine 5-monophosphate (from uridine 5-triphosphate), a reaction catalyzed by the N-terminal domain. The sequence is that of Bifunctional protein GlmU from Staphylococcus haemolyticus (strain JCSC1435).